A 2515-amino-acid polypeptide reads, in one-letter code: Nonribosomal peptide synthetase tpzA (2515 aa).

An adenylation 1 region spans residues 246-648; that stretch reads ELATRQPGAQ…GRMGTQVKLR (403 aa). Residues 794–867 form the Carrier 1 domain; it reads SEVEHLIHAI…DMATVALKTS (74 aa). At Ser828 the chain carries O-(pantetheine 4'-phosphoryl)serine. Residues 924-1332 form a condensation 1 region; the sequence is DAYPCSPLQE…IRSVPHITPE (409 aa). The tract at residues 1357–1758 is adenylation 2; it reads RKQSQETPSA…GRMNDQIKLR (402 aa). The Carrier 2 domain maps to 1900-1976; it reads LATTNEERTL…AILSHLTGRK (77 aa). Residue Ser1937 is modified to O-(pantetheine 4'-phosphoryl)serine. Residues 2013 to 2431 are condensation 2; sequence VEDIYPCGPI…LGILPPEEQK (419 aa). The Carrier 3 domain occupies 2436–2512; the sequence is PSLSAAVVRL…AMARRSLVVS (77 aa). O-(pantetheine 4'-phosphoryl)serine is present on Ser2473.

This sequence belongs to the NRP synthetase family.

It functions in the pathway secondary metabolite biosynthesis. Nonribosomal peptide synthetase; part of the gene cluster that mediates the biosynthesis of terreazepine,. The first step of terreazepine biosynthesis is catalyzed by the indoleamine 2,3-dioxygenase tpzB which produces N-formyl-kynurenine through the catabolism of tryptophan. The two-module NRPS tpzA then utilizes anthranilate and kynurenine to assemble terreazepine. The first adenylation domain of tpzA (A1) loads anthranilate onto the T1 domain, while A2 loads kynurenine, generated through spontaneous nonenzymatic deformylation of the tzpB-supplied N-formyl-kynurenine. TpzA produces a 2:1 mixture of S-R enantiomers, which suggests that the A2 domain accepts both D- and L-kynurenine. The peptide bond formation between the tethered amino acids is catalyzed by the first condensation domain (C1) between anthranilate's carbonyl carbon and kynurenine's aliphatic primary amine. The second C domain (C2) catalyzes the final cyclization event between the aromatic amine of kynurenine and the tethered carbonyl carbon, yielding the final terreazepine product. The T3 domain may facilitate the interaction with downstream tailoring enzymes. The sequence is that of Nonribosomal peptide synthetase tpzA from Aspergillus terreus (strain NIH 2624 / FGSC A1156).